A 414-amino-acid polypeptide reads, in one-letter code: Histidine--tRNA ligase (414 aa).

This sequence belongs to the class-II aminoacyl-tRNA synthetase family. Homodimer.

The protein resides in the cytoplasm. It catalyses the reaction tRNA(His) + L-histidine + ATP = L-histidyl-tRNA(His) + AMP + diphosphate + H(+). The polypeptide is Histidine--tRNA ligase (Ehrlichia ruminantium (strain Welgevonden)).